Consider the following 284-residue polypeptide: 2-dehydro-3-deoxyphosphooctonate aldolase (284 aa).

Belongs to the KdsA family.

It localises to the cytoplasm. It carries out the reaction D-arabinose 5-phosphate + phosphoenolpyruvate + H2O = 3-deoxy-alpha-D-manno-2-octulosonate-8-phosphate + phosphate. It functions in the pathway carbohydrate biosynthesis; 3-deoxy-D-manno-octulosonate biosynthesis; 3-deoxy-D-manno-octulosonate from D-ribulose 5-phosphate: step 2/3. It participates in bacterial outer membrane biogenesis; lipopolysaccharide biosynthesis. The sequence is that of 2-dehydro-3-deoxyphosphooctonate aldolase from Aliivibrio salmonicida (strain LFI1238) (Vibrio salmonicida (strain LFI1238)).